Consider the following 138-residue polypeptide: Large ribosomal subunit protein uL16 (138 aa).

Residues 1-13 are compositionally biased toward basic residues; that stretch reads MLQPARRKYRKEQ. The tract at residues 1 to 22 is disordered; sequence MLQPARRKYRKEQKGRNTGVAT.

Belongs to the universal ribosomal protein uL16 family. In terms of assembly, part of the 50S ribosomal subunit.

Functionally, binds 23S rRNA and is also seen to make contacts with the A and possibly P site tRNAs. This is Large ribosomal subunit protein uL16 from Polaromonas naphthalenivorans (strain CJ2).